We begin with the raw amino-acid sequence, 115 residues long: Phosphoribosyl-AMP cyclohydrolase (115 aa).

A Mg(2+)-binding site is contributed by aspartate 80. Residue cysteine 81 coordinates Zn(2+). Residues aspartate 82 and aspartate 84 each coordinate Mg(2+). Residues cysteine 97 and cysteine 104 each coordinate Zn(2+).

Belongs to the PRA-CH family. As to quaternary structure, homodimer. Mg(2+) serves as cofactor. Zn(2+) is required as a cofactor.

The protein resides in the cytoplasm. It catalyses the reaction 1-(5-phospho-beta-D-ribosyl)-5'-AMP + H2O = 1-(5-phospho-beta-D-ribosyl)-5-[(5-phospho-beta-D-ribosylamino)methylideneamino]imidazole-4-carboxamide. Its pathway is amino-acid biosynthesis; L-histidine biosynthesis; L-histidine from 5-phospho-alpha-D-ribose 1-diphosphate: step 3/9. In terms of biological role, catalyzes the hydrolysis of the adenine ring of phosphoribosyl-AMP. In Mycobacterium avium (strain 104), this protein is Phosphoribosyl-AMP cyclohydrolase.